The following is a 38-amino-acid chain: Iota-conotoxin-like L11.5 (38 aa).

Intrachain disulfides connect Cys5/Cys19, Cys12/Cys24, Cys18/Cys29, and Cys23/Cys36.

The protein belongs to the conotoxin I1 superfamily. In terms of tissue distribution, expressed by the venom duct.

It is found in the secreted. Its function is as follows. Iota-conotoxins bind to voltage-gated sodium channels (Nav) and act as agonists by shifting the voltage-dependence of activation to more hyperpolarized levels. Produces general excitatory symptoms. The chain is Iota-conotoxin-like L11.5 from Conus lynceus (Lynceus cone).